A 215-amino-acid polypeptide reads, in one-letter code: MATERHYSPLDRLLLQADTAMRTLLPFSGQPARPSPAIIQPDADLDEQQSRHIAGLMRINHTGEVCAQALYQGQALTAKLPEVRKAMEHAAEEEIDHLAWCEQRIRQLNSHPSVLNPLFYGMSFGIGALAGLVSDKVSLGFVAATEHQVCKHLDEHLEQIPHEDEKSRAILEQMRIDEEQHAESALEAGGYRFPAPVRFGMSLLAKVMTKSTYRI.

Glu64, Glu94, His97, Glu146, Glu178, and His181 together coordinate Fe cation.

The protein belongs to the COQ7 family. It depends on Fe cation as a cofactor.

Its subcellular location is the cell membrane. It catalyses the reaction a 5-methoxy-2-methyl-3-(all-trans-polyprenyl)benzene-1,4-diol + AH2 + O2 = a 3-demethylubiquinol + A + H2O. It functions in the pathway cofactor biosynthesis; ubiquinone biosynthesis. Functionally, catalyzes the hydroxylation of 2-nonaprenyl-3-methyl-6-methoxy-1,4-benzoquinol during ubiquinone biosynthesis. This is 3-demethoxyubiquinol 3-hydroxylase from Pseudomonas putida (strain GB-1).